A 257-amino-acid polypeptide reads, in one-letter code: MPRIGIIGGSGVYGVFEPKETVKVHTPYGRPSAPVEIGEIEGVEVAFIPRHGKHHEFPPHEVPYRANIWALKELGVERVIGITAVGSLREEYKPGDIVITDQFIDFTKKRDYTFYNGPRVAHVSMADPFCPEMRKIFYETAKELGFPVHEKGTYVCIEGPRFSTRAESFMFRQFAHIIGMTLVPEVNLARELGMCYVNIATVTDYDVWADKPVDAQEVLKVMAENNYKVQELLKKGIPKIPEERHCGCADVLKTMFV.

Phosphate is bound by residues serine 10, 50–51 (RH), and 83–84 (TA). Methionine 180 is a binding site for substrate. Threonine 181 is a binding site for phosphate. 204–206 (DYD) is a binding site for substrate.

Belongs to the PNP/MTAP phosphorylase family. MTAP subfamily. In terms of assembly, homohexamer. Dimer of a homotrimer.

It catalyses the reaction S-methyl-5'-thioadenosine + phosphate = 5-(methylsulfanyl)-alpha-D-ribose 1-phosphate + adenine. It carries out the reaction adenosine + phosphate = alpha-D-ribose 1-phosphate + adenine. It participates in amino-acid biosynthesis; L-methionine biosynthesis via salvage pathway; S-methyl-5-thio-alpha-D-ribose 1-phosphate from S-methyl-5'-thioadenosine (phosphorylase route): step 1/1. In terms of biological role, catalyzes the reversible phosphorylation of S-methyl-5'-thioadenosine (MTA) to adenine and 5-methylthioribose-1-phosphate. Involved in the breakdown of MTA, a major by-product of polyamine biosynthesis. Responsible for the first step in the methionine salvage pathway after MTA has been generated from S-adenosylmethionine. Has broad substrate specificity with 6-aminopurine nucleosides as preferred substrates. Can also use adenosine as substrate to form ribose 1-phosphate. The polypeptide is S-methyl-5'-thioadenosine phosphorylase (Thermococcus kodakarensis (strain ATCC BAA-918 / JCM 12380 / KOD1) (Pyrococcus kodakaraensis (strain KOD1))).